The following is a 409-amino-acid chain: Inner membrane transport protein YqeG (409 aa).

Residues 1–25 (MSNIWSKEETLWSFALYGTAVGAGT) lie on the Periplasmic side of the membrane. A helical membrane pass occupies residues 26-46 (LFLPIQLGSAGAVVLFITALV). Residues 47-87 (AWPLTYWPHKALCQFILSSKTSAGEGITGAVTHYYGKKIGN) lie on the Cytoplasmic side of the membrane. The chain crosses the membrane as a helical span at residues 88 to 108 (LITTLYFIAFFVVVLIYAVAI). Over 109–127 (TNSLTEQLAKHMVIDLRIR) the chain is Periplasmic. A helical membrane pass occupies residues 128-148 (MLVSLGVVLILNLIFLMGRHA). The Cytoplasmic portion of the chain corresponds to 149-151 (TIR). The helical transmembrane segment at 152 to 172 (VMGFLVFPLIAYFLFLSIYLV) threads the bilayer. The Periplasmic portion of the chain corresponds to 173–193 (GSWQPDLLTTQVEFNQNTLHQ). Residues 194–214 (IWISIPVMVFAFSHTPIISTF) traverse the membrane as a helical segment. Over 215–235 (AIDRREKYGEHAMDKCKKIMK) the chain is Cytoplasmic. A helical transmembrane segment spans residues 236–256 (VAYLIICISVLFFVFSCLLSI). Residues 257-276 (PPSYIEAAKEEGVTILSALS) lie on the Periplasmic side of the membrane. Residues 277–297 (MLPNAPAWLSISGIIVAVVAM) traverse the membrane as a helical segment. The Cytoplasmic portion of the chain corresponds to 298–329 (SKSFLGTYFGVIEGATEVVKTTLQQVGVKKSR). The helical transmembrane segment at 330 to 350 (AFNRALSIMLVSLITFIVCCI) threads the bilayer. Residues 351-353 (NPN) lie on the Periplasmic side of the membrane. Residues 354–374 (AISMIYAISGPLIAMILFIMP) form a helical membrane-spanning segment. The Cytoplasmic portion of the chain corresponds to 375–388 (TLSTYLIPALKPWR). Residues 389–409 (SIGNLITLIVGILCVSVMFFS) traverse the membrane as a helical segment.

This sequence belongs to the amino acid/polyamine transporter 2 family. SdaC/TdcC subfamily.

The protein resides in the cell inner membrane. The sequence is that of Inner membrane transport protein YqeG (yqeG) from Escherichia coli O6:H1 (strain CFT073 / ATCC 700928 / UPEC).